The sequence spans 235 residues: Claudin-16 (235 aa).

The Cytoplasmic segment spans residues 1 to 3 (MKD). The chain crosses the membrane as a helical span at residues 4–24 (LLQYAACFLAIFSTGFLIVAT). The Extracellular portion of the chain corresponds to 25 to 79 (WTDCWMVNADDSLEVSTKCRGLWWECVTNAFDGIRTCDEYDSIYAEHPLKLVVTR). A helical membrane pass occupies residues 80 to 100 (ALMITADILAGFGFITLLLGL). The Cytoplasmic segment spans residues 101-115 (DCVKFLPDDPQIKVR). Residues 116 to 136 (LCFVAGTTLLIAGTPGIIGSV) traverse the membrane as a helical segment. The Extracellular portion of the chain corresponds to 137–169 (WYAVDVYVERSSLVLHNIFLGIQYKFGWSCWLG). The chain crosses the membrane as a helical span at residues 170-190 (MAGSLGCFLAGALLTCCLYLF). The Cytoplasmic segment spans residues 191–235 (KDVGPERNYPYAMRKPYSTAGVSMAKSYKAPRTETAKMYAVDTRV). An Interaction with TJP1 motif is present at residues 233-235 (TRV).

This sequence belongs to the claudin family. In terms of assembly, can form heteropolymeric tight junction strands with other claudins. Interacts with CLDN19. Cannot form tight junction strands on its own. Interacts (via PDZ-binding motif TRV) with TJP1 (via PDZ domain). As to expression, expressed in the corticomedullary axis of the TAL, specifically in the cortex and the outer stripe of outer medulla (OSOM) zone (at protein level).

The protein localises to the cell junction. It localises to the tight junction. The protein resides in the cell membrane. It carries out the reaction Mg(2+)(in) = Mg(2+)(out). The catalysed reaction is Ca(2+)(in) = Ca(2+)(out). The enzyme catalyses Na(+)(in) = Na(+)(out). It catalyses the reaction K(+)(in) = K(+)(out). It carries out the reaction Rb(+)(in) = Rb(+)(out). The catalysed reaction is Cs(+)(in) = Cs(+)(out). The enzyme catalyses Li(+)(in) = Li(+)(out). Its function is as follows. Forms paracellular channels: coassembles with CLDN19 into tight junction strands with cation-selective channels through the strands, conveying epithelial permeability in a process known as paracellular tight junction permeability. Involved in the maintenance of ion gradients along the nephron. In the thick ascending limb (TAL) of Henle's loop, facilitates sodium paracellular permeability from the interstitial compartment to the lumen, contributing to the lumen-positive transepithelial potential that drives paracellular magnesium and calcium reabsorption. The chain is Claudin-16 from Mus musculus (Mouse).